A 388-amino-acid chain; its full sequence is Pyruvate dehydrogenase E1 component subunit alpha, testis-specific form, mitochondrial (388 aa).

A mitochondrion-targeting transit peptide spans 1 to 27 (MLAAFISRVLRRVAQKSARRVLVASRN). The pyruvate site is built by H90, Y116, R117, G163, V165, D194, G195, A196, N223, and Y225. Residues Y116, R117, G163, V165, D194, G195, A196, and N223 each contribute to the thiamine diphosphate site. D194 is a Mg(2+) binding site. Mg(2+) contacts are provided by N223 and Y225. Residue H290 coordinates thiamine diphosphate. At S291 the chain carries Phosphoserine; by PDK1, PDK2, PDK3 and PDK4. S293 carries the post-translational modification Phosphoserine. S298 is subject to Phosphoserine; by PDK3.

In terms of assembly, heterotetramer of two PDHA2 and two PDHB subunits. The heterotetramer interacts with DLAT, and is part of the multimeric pyruvate dehydrogenase complex that contains multiple copies of pyruvate dehydrogenase (E1), dihydrolipoamide acetyltransferase (DLAT, E2) and lipoamide dehydrogenase (DLD, E3). These subunits are bound to an inner core composed of about 48 DLAT and 12 PDHX molecules. Thiamine diphosphate serves as cofactor. Mg(2+) is required as a cofactor. In terms of processing, phosphorylation at Ser-291, Ser-293 and Ser-298 by PDK family kinases inactivates the enzyme; for this phosphorylation at a single site is sufficient. Phosphorylation at Ser-293 interferes with access to active site, and thereby inactivates the enzyme. Dephosphorylation at all three sites, i.e. at Ser-291, Ser-293 and Ser-298, is required for reactivation. Testis. Expressed in postmeiotic spermatogenic cells.

It is found in the mitochondrion matrix. It carries out the reaction N(6)-[(R)-lipoyl]-L-lysyl-[protein] + pyruvate + H(+) = N(6)-[(R)-S(8)-acetyldihydrolipoyl]-L-lysyl-[protein] + CO2. Its activity is regulated as follows. Pyruvate dehydrogenase activity is inhibited by phosphorylation of PDHA2; it is reactivated by dephosphorylation. In terms of biological role, the pyruvate dehydrogenase complex catalyzes the overall conversion of pyruvate to acetyl-CoA and CO(2), and thereby links the glycolytic pathway to the tricarboxylic cycle. The sequence is that of Pyruvate dehydrogenase E1 component subunit alpha, testis-specific form, mitochondrial (PDHA2) from Homo sapiens (Human).